We begin with the raw amino-acid sequence, 594 residues long: Developmental and secondary metabolism regulator veA (594 aa).

Positions 24–220 (GRRLFYRIDV…AEQGTRVRIR (197 aa)) constitute a Velvet domain. The Nuclear localization signal signature appears at 38–43 (EKCRAC). 2 disordered regions span residues 40–59 (CRAC…VDPP) and 210–558 (MAEQ…DVEE). The segment covering 217-229 (VRIRRDVRMRRRD) has biased composition (basic residues). The segment covering 296–307 (APPPPNPPPPGF) has biased composition (pro residues). The segment covering 327 to 351 (SHSQYQQPTSSSSSSEQVSSVPQSP) has biased composition (low complexity). Residues 352-362 (AYSSHAAQQHY) show a composition bias toward polar residues. A compositionally biased stretch (basic and acidic residues) spans 374 to 383 (PERRLSDHRS). Positions 384–403 (SQPNNHPQQSPHQHSYSHRS) are enriched in low complexity. Positions 405-416 (PQRERFMPDSRR) are enriched in basic and acidic residues. The PEST stretch occupies residues 457–506 (VADTQATPHLPPIRWPRPNMNLPSPPSEHQEALQPLQPAPLHYESQTHQQ). A compositionally biased stretch (low complexity) spans 523-538 (YSYGYSYSHNHSHGYG).

The protein belongs to the velvet family. VeA subfamily. As to quaternary structure, component of the heterotrimeric velvet complex composed of LAEA, VEA and VELB; VEA acting as a bridging protein between LAEA and VELB.

It is found in the nucleus. The protein resides in the cytoplasm. Its function is as follows. Component of the velvet transcription factor complex that controls sexual/asexual developmental ratio in response to light, promoting sexual development in the darkness while stimulating asexual sporulation under illumination. The velvet complex acts as a global regulator for secondary metabolite gene expression. Regulates of the response to reactive oxygen species (ROS) stress. The polypeptide is Developmental and secondary metabolism regulator veA (Pyricularia oryzae (strain 70-15 / ATCC MYA-4617 / FGSC 8958) (Rice blast fungus)).